Consider the following 419-residue polypeptide: Transcription termination factor Rho (419 aa).

A Rho RNA-BD domain is found at 48–123 (DIFGDGVLEI…LKVNEVNYDK (76 aa)). RNA-binding stretches follow at residues 61 to 66 (GFGFLR), 78 to 80 (DIY), and 108 to 110 (ERY). Residues 169 to 174 (GRGQRG), 181 to 186 (KAGKTI), and Arg-212 each bind ATP. The segment at 284–288 (VLTGG) is RNA-binding 2.

Belongs to the Rho family. In terms of assembly, homohexamer. The homohexamer assembles into an open ring structure.

Its function is as follows. Facilitates transcription termination by a mechanism that involves Rho binding to the nascent RNA, activation of Rho's RNA-dependent ATPase activity, and release of the mRNA from the DNA template. This chain is Transcription termination factor Rho, found in Buchnera aphidicola subsp. Acyrthosiphon pisum (strain APS) (Acyrthosiphon pisum symbiotic bacterium).